The sequence spans 458 residues: Protein amnionless (458 aa).

The signal sequence occupies residues 1-19 (MGALGRALLWLQLCALARA). Topologically, residues 20–366 (AYKLWVPTTD…LGSGSRAGLA (347 aa)) are extracellular. A glycan (N-linked (GlcNAc...) asparagine) is linked at Asn35. Intrachain disulfides connect Cys43/Cys96, Cys137/Cys213, Cys205/Cys211, Cys223/Cys249, Cys234/Cys250, and Cys239/Cys253. Residues 67-87 (SDMLLPRDGEFVLASGAGFGA) are interaction with CUBN. The 52-residue stretch at 203–254 (GACADPSGCVCGDAEVQPWICAALLQPLGGRCPPAACPDALRPEGQCCDLCG) folds into the VWFC domain. The chain crosses the membrane as a helical span at residues 367–387 (GGVAAGLLLLLLALAAGLLLL). The Cytoplasmic portion of the chain corresponds to 388 to 458 (RRAPRLRWTK…VNPLFAEAEA (71 aa)). Positions 422–446 (SVGPVPRTPQPPPAQQAGSSSTSRS) are disordered.

As to quaternary structure, interacts (via extracellular region) with CUBN/cubilin. This gives rise to a huge complex containing one AMN chain and three CUBN chains. Post-translationally, N-glycosylated. In terms of processing, a soluble form arises by proteolytic removal of the membrane anchor. Detected in kidney (at protein level). Detected in kidney and ileum.

The protein resides in the apical cell membrane. The protein localises to the cell membrane. It localises to the endosome membrane. It is found in the membrane. Its subcellular location is the coated pit. The protein resides in the secreted. Membrane-bound component of the endocytic receptor formed by AMN and CUBN. Required for normal CUBN glycosylation and trafficking to the cell surface. The complex formed by AMN and CUBN is required for efficient absorption of vitamin B12. Required for normal CUBN-mediated protein transport in the kidney. In Canis lupus familiaris (Dog), this protein is Protein amnionless (AMN).